Consider the following 645-residue polypeptide: Translation factor GUF1 homolog, mitochondrial (645 aa).

The tr-type G domain occupies 40 to 215 (EKIRNFGIVA…AIVERVPAPT (176 aa)). Residues 49–56 (AHVDHGKS), 108–112 (DTPGH), and 162–165 (NKID) contribute to the GTP site.

It belongs to the TRAFAC class translation factor GTPase superfamily. Classic translation factor GTPase family. LepA subfamily.

The protein localises to the mitochondrion inner membrane. It catalyses the reaction GTP + H2O = GDP + phosphate + H(+). Functionally, promotes mitochondrial protein synthesis. May act as a fidelity factor of the translation reaction, by catalyzing a one-codon backward translocation of tRNAs on improperly translocated ribosomes. Binds to mitochondrial ribosomes in a GTP-dependent manner. This chain is Translation factor GUF1 homolog, mitochondrial, found in Caenorhabditis briggsae.